The sequence spans 290 residues: Phosphoribosylaminoimidazole-succinocarboxamide synthase (290 aa).

The protein belongs to the SAICAR synthetase family.

The enzyme catalyses 5-amino-1-(5-phospho-D-ribosyl)imidazole-4-carboxylate + L-aspartate + ATP = (2S)-2-[5-amino-1-(5-phospho-beta-D-ribosyl)imidazole-4-carboxamido]succinate + ADP + phosphate + 2 H(+). Its pathway is purine metabolism; IMP biosynthesis via de novo pathway; 5-amino-1-(5-phospho-D-ribosyl)imidazole-4-carboxamide from 5-amino-1-(5-phospho-D-ribosyl)imidazole-4-carboxylate: step 1/2. The polypeptide is Phosphoribosylaminoimidazole-succinocarboxamide synthase (Haemophilus influenzae (strain PittGG)).